The following is a 435-amino-acid chain: Eukaryotic translation initiation factor 3 subunit E (435 aa).

The region spanning 219-392 (FFNHAKGRDL…GHVVMGTQPL (174 aa)) is the PCI domain.

The protein belongs to the eIF-3 subunit E family. Component of the eukaryotic translation initiation factor 3 (eIF-3) complex.

The protein resides in the cytoplasm. In terms of biological role, component of the eukaryotic translation initiation factor 3 (eIF-3) complex, which is involved in protein synthesis of a specialized repertoire of mRNAs and, together with other initiation factors, stimulates binding of mRNA and methionyl-tRNAi to the 40S ribosome. The eIF-3 complex specifically targets and initiates translation of a subset of mRNAs involved in cell proliferation. This is Eukaryotic translation initiation factor 3 subunit E (eIF3-S6) from Culex quinquefasciatus (Southern house mosquito).